Consider the following 360-residue polypeptide: MNVDALTGGFDRRDWQEQTATDNPVRFAMIGVGWWTTEQAMPAVDAGDLCETTVLVSSDREKAADVAADSETVEHAITYEEFHDGAASDAYDAVYIVTPNALHLPYVETAAELDKAILCEKPMEATIERAERMVEVCDEHDATLMIAYRMHTEPAVRRAKDLIDEGYIGEPLFVHGNMTEPILELVPDPDQWRLDGELSGGCAVMDIGIYPLNTSRFLLDADPVAVRGTVASVQEEFADVPDEHGAFQLDFPGHVYAVCTASQNAHLDSHISVLGTEGKVRVEPAFYPWDDRALQLSHEGTTVEIDFEQIDQMEEEFEYFAHCLLTDTEPYADGEHGLVDINTIKSVYEASETESTVRLD.

It belongs to the Gfo/Idh/MocA family. In terms of assembly, homotretramer.

It carries out the reaction D-xylofuranose + NADP(+) = D-xylono-1,4-lactone + NADPH + H(+). NADP-dependent D-xylose dehydrogenase involved in the degradation of D-xylose, a major component of hemicelluloses such as xylan. In addition to D-xylose, oxidizes D-ribose at similar kinetic constants, whereas D-glucose is oxidized with about 70-fold lower catalytic efficiency. The chain is D-xylose 1-dehydrogenase [NADP(+)] (gfo6) from Haloarcula marismortui (strain ATCC 43049 / DSM 3752 / JCM 8966 / VKM B-1809) (Halobacterium marismortui).